The following is a 151-amino-acid chain: Acidic phospholipase A2 1 (151 aa).

An N-terminal signal peptide occupies residues 1 to 21 (MNPAHLLVLSAVCVSLLGASS). The propeptide occupies 22-27 (IPPQPL). 7 cysteine pairs are disulfide-bonded: C38–C104, C54–C151, C56–C72, C71–C132, C78–C125, C88–C118, and C111–C123. The Ca(2+) site is built by Y55, G57, and G59. H75 is an active-site residue. D76 contributes to the Ca(2+) binding site. The active site involves D126.

Requires Ca(2+) as cofactor. In terms of tissue distribution, expressed by the venom gland.

It localises to the secreted. The enzyme catalyses a 1,2-diacyl-sn-glycero-3-phosphocholine + H2O = a 1-acyl-sn-glycero-3-phosphocholine + a fatty acid + H(+). In terms of biological role, snake venom phospholipase A2 (PLA2) that may exhibit cardiotoxicity, myotoxicity, antiplatelet activity, and edema-inducing activity. PLA2 catalyzes the calcium-dependent hydrolysis of the 2-acyl groups in 3-sn-phosphoglycerides. The protein is Acidic phospholipase A2 1 of Ophiophagus hannah (King cobra).